The following is a 330-amino-acid chain: DNA-directed RNA polymerase subunit alpha (330 aa).

Residues 1-237 (MYTEINEMLT…RQLHAFVDMK (237 aa)) form an alpha N-terminal domain (alpha-NTD) region. The tract at residues 251 to 330 (FDPVLLRSVD…ENWPPASLGE (80 aa)) is alpha C-terminal domain (alpha-CTD).

It belongs to the RNA polymerase alpha chain family. Homodimer. The RNAP catalytic core consists of 2 alpha, 1 beta, 1 beta' and 1 omega subunit. When a sigma factor is associated with the core the holoenzyme is formed, which can initiate transcription.

The catalysed reaction is RNA(n) + a ribonucleoside 5'-triphosphate = RNA(n+1) + diphosphate. Its function is as follows. DNA-dependent RNA polymerase catalyzes the transcription of DNA into RNA using the four ribonucleoside triphosphates as substrates. The polypeptide is DNA-directed RNA polymerase subunit alpha (Legionella pneumophila (strain Corby)).